The sequence spans 693 residues: Glycine--tRNA ligase beta subunit (693 aa).

It belongs to the class-II aminoacyl-tRNA synthetase family. As to quaternary structure, tetramer of two alpha and two beta subunits.

It localises to the cytoplasm. The enzyme catalyses tRNA(Gly) + glycine + ATP = glycyl-tRNA(Gly) + AMP + diphosphate. The chain is Glycine--tRNA ligase beta subunit (glyS) from Halalkalibacterium halodurans (strain ATCC BAA-125 / DSM 18197 / FERM 7344 / JCM 9153 / C-125) (Bacillus halodurans).